Reading from the N-terminus, the 368-residue chain is Histidinol-phosphate aminotransferase (368 aa).

Position 228 is an N6-(pyridoxal phosphate)lysine (Lys-228).

It belongs to the class-II pyridoxal-phosphate-dependent aminotransferase family. Histidinol-phosphate aminotransferase subfamily. Homodimer. The cofactor is pyridoxal 5'-phosphate.

The enzyme catalyses L-histidinol phosphate + 2-oxoglutarate = 3-(imidazol-4-yl)-2-oxopropyl phosphate + L-glutamate. It functions in the pathway amino-acid biosynthesis; L-histidine biosynthesis; L-histidine from 5-phospho-alpha-D-ribose 1-diphosphate: step 7/9. The polypeptide is Histidinol-phosphate aminotransferase (hisC) (Methylobacillus flagellatus).